Reading from the N-terminus, the 258-residue chain is Ribosomal RNA small subunit methyltransferase J (258 aa).

Residues 104-105 (RD), 120-121 (ER), and Asp-175 each bind S-adenosyl-L-methionine.

Belongs to the methyltransferase superfamily. RsmJ family.

It is found in the cytoplasm. The enzyme catalyses guanosine(1516) in 16S rRNA + S-adenosyl-L-methionine = N(2)-methylguanosine(1516) in 16S rRNA + S-adenosyl-L-homocysteine + H(+). In terms of biological role, specifically methylates the guanosine in position 1516 of 16S rRNA. The polypeptide is Ribosomal RNA small subunit methyltransferase J (Chromobacterium violaceum (strain ATCC 12472 / DSM 30191 / JCM 1249 / CCUG 213 / NBRC 12614 / NCIMB 9131 / NCTC 9757 / MK)).